Reading from the N-terminus, the 71-residue chain is Protein SlyX homolog (71 aa).

It belongs to the SlyX family.

The sequence is that of Protein SlyX homolog from Rhodospirillum rubrum (strain ATCC 11170 / ATH 1.1.1 / DSM 467 / LMG 4362 / NCIMB 8255 / S1).